Here is a 170-residue protein sequence, read N- to C-terminus: Acetyl-CoA decarbonylase/synthase complex subunit epsilon 1 (170 aa).

The protein belongs to the CdhB family. As to quaternary structure, heterotetramer of two alpha and two epsilon subunits. The ACDS complex is made up of alpha, epsilon, beta, gamma and delta subunits with a probable stoichiometry of (alpha(2)epsilon(2))(4)-beta(8)-(gamma(1)delta(1))(8).

It functions in the pathway one-carbon metabolism; methanogenesis from acetate. Its function is as follows. Part of a complex that catalyzes the reversible cleavage of acetyl-CoA, allowing growth on acetate as sole source of carbon and energy. The alpha-epsilon subcomponent functions as a carbon monoxide dehydrogenase. The precise role of the epsilon subunit is unclear; it may have a stabilizing role within the alpha(2)epsilon(2) component and/or be involved in electron transfer to FAD during a potential FAD-mediated CO oxidation. The polypeptide is Acetyl-CoA decarbonylase/synthase complex subunit epsilon 1 (Methanosarcina barkeri (strain Fusaro / DSM 804)).